We begin with the raw amino-acid sequence, 674 residues long: tRNA-guanine(15) transglycosylase (674 aa).

Residue aspartate 90 is the Nucleophile of the active site. Substrate contacts are provided by aspartate 125 and alanine 192. Positions 275, 277, and 280 each coordinate Zn(2+). The 76-residue stretch at 596 to 671 folds into the PUA domain; the sequence is HNRVVVSEDS…QAIKTRKWKK (76 aa).

The protein belongs to the archaeosine tRNA-ribosyltransferase family. Zn(2+) is required as a cofactor.

It catalyses the reaction guanosine(15) in tRNA + 7-cyano-7-deazaguanine = 7-cyano-7-carbaguanosine(15) in tRNA + guanine. The protein operates within tRNA modification; archaeosine-tRNA biosynthesis. In terms of biological role, exchanges the guanine residue with 7-cyano-7-deazaguanine (preQ0) at position 15 in the dihydrouridine loop (D-loop) of archaeal tRNAs. The protein is tRNA-guanine(15) transglycosylase of Methanosphaera stadtmanae (strain ATCC 43021 / DSM 3091 / JCM 11832 / MCB-3).